The following is a 490-amino-acid chain: GTPase Der (490 aa).

EngA-type G domains are found at residues 3-166 (PVVA…MEDL) and 203-376 (IKLA…DSST). GTP-binding positions include 9–16 (GRPNVGKS), 56–60 (DTGGI), 118–121 (NKTD), 209–216 (GRPNVGKS), 256–260 (DTAGV), and 321–324 (NKWD). In terms of domain architecture, KH-like spans 377–461 (RRVGTSMLTR…PIRIQFKEGE (85 aa)).

This sequence belongs to the TRAFAC class TrmE-Era-EngA-EngB-Septin-like GTPase superfamily. EngA (Der) GTPase family. In terms of assembly, associates with the 50S ribosomal subunit.

Its function is as follows. GTPase that plays an essential role in the late steps of ribosome biogenesis. In Escherichia fergusonii (strain ATCC 35469 / DSM 13698 / CCUG 18766 / IAM 14443 / JCM 21226 / LMG 7866 / NBRC 102419 / NCTC 12128 / CDC 0568-73), this protein is GTPase Der.